Reading from the N-terminus, the 130-residue chain is Small ribosomal subunit protein uS9 (130 aa).

This sequence belongs to the universal ribosomal protein uS9 family.

This Vibrio campbellii (strain ATCC BAA-1116) protein is Small ribosomal subunit protein uS9.